Reading from the N-terminus, the 106-residue chain is uncharacterized protein (106 aa).

3 consecutive transmembrane segments (helical) span residues 4–24, 27–47, and 78–98; these read LPVV…IGFL, MLLR…LFII, and VLIL…INML.

It is found in the cell membrane. This is an uncharacterized protein from Bacillus subtilis (strain 168).